The sequence spans 304 residues: ATP synthase gamma chain (304 aa).

This sequence belongs to the ATPase gamma chain family. In terms of assembly, F-type ATPases have 2 components, CF(1) - the catalytic core - and CF(0) - the membrane proton channel. CF(1) has five subunits: alpha(3), beta(3), gamma(1), delta(1), epsilon(1). CF(0) has three main subunits: a, b and c.

The protein resides in the cell membrane. Its function is as follows. Produces ATP from ADP in the presence of a proton gradient across the membrane. The gamma chain is believed to be important in regulating ATPase activity and the flow of protons through the CF(0) complex. The sequence is that of ATP synthase gamma chain from Mycobacterium ulcerans (strain Agy99).